Here is a 359-residue protein sequence, read N- to C-terminus: 3-dehydroquinate synthase (359 aa).

NAD(+)-binding positions include 69 to 74, 103 to 107, 127 to 128, K140, K149, and 167 to 170; these read DGEAHK, GVIGD, TT, and TLDT. The Zn(2+) site is built by E182, H245, and H262.

The protein belongs to the sugar phosphate cyclases superfamily. Dehydroquinate synthase family. The cofactor is Co(2+). It depends on Zn(2+) as a cofactor. NAD(+) is required as a cofactor.

The protein localises to the cytoplasm. The catalysed reaction is 7-phospho-2-dehydro-3-deoxy-D-arabino-heptonate = 3-dehydroquinate + phosphate. Its pathway is metabolic intermediate biosynthesis; chorismate biosynthesis; chorismate from D-erythrose 4-phosphate and phosphoenolpyruvate: step 2/7. Functionally, catalyzes the conversion of 3-deoxy-D-arabino-heptulosonate 7-phosphate (DAHP) to dehydroquinate (DHQ). This is 3-dehydroquinate synthase from Methylococcus capsulatus (strain ATCC 33009 / NCIMB 11132 / Bath).